The following is a 600-amino-acid chain: Elongation factor 4 (600 aa).

The tr-type G domain maps to lysine 5 to lysine 187. GTP-binding positions include aspartate 17–threonine 22 and asparagine 134–aspartate 137.

Belongs to the TRAFAC class translation factor GTPase superfamily. Classic translation factor GTPase family. LepA subfamily.

It localises to the cell inner membrane. It catalyses the reaction GTP + H2O = GDP + phosphate + H(+). Its function is as follows. Required for accurate and efficient protein synthesis under certain stress conditions. May act as a fidelity factor of the translation reaction, by catalyzing a one-codon backward translocation of tRNAs on improperly translocated ribosomes. Back-translocation proceeds from a post-translocation (POST) complex to a pre-translocation (PRE) complex, thus giving elongation factor G a second chance to translocate the tRNAs correctly. Binds to ribosomes in a GTP-dependent manner. In Rickettsia conorii (strain ATCC VR-613 / Malish 7), this protein is Elongation factor 4.